A 1006-amino-acid chain; its full sequence is Transmembrane channel-like protein 5 (1006 aa).

Residues 1-289 (MSAYYRNNWS…DDPVGSLWGE (289 aa)) form a disordered region. Residues 1-458 (MSAYYRNNWS…YFNFLRWLLK (458 aa)) are Extracellular-facing. Polar residues-rich tracts occupy residues 20-30 (SGSQNRTQGYL), 50-59 (TRSNPYSVAS), and 76-101 (RSLSNPDYSGTRSNAYSAASRTSPDH). The segment covering 138–149 (AGSSSSGNYAGS) has biased composition (low complexity). The segment covering 239-250 (REPDYSDAENGH) has biased composition (basic and acidic residues). The helical transmembrane segment at 459-479 (FNIFSFILNFSFIIIPQFTVA) threads the bilayer. The Cytoplasmic portion of the chain corresponds to 480 to 485 (KKNTLQ). The chain crosses the membrane as a helical span at residues 486–508 (FTGLEFFTGVGYFRDTVMYYGFY). The Extracellular portion of the chain corresponds to 509–525 (TNSTIQHGNSGASYNMQ). Residues 526-546 (LAYIFTIGACLTTCFFSLLFS) form a helical membrane-spanning segment. The Cytoplasmic portion of the chain corresponds to 547–619 (MAKYFRNNFI…NQLLTRFSAY (73 aa)). A helical transmembrane segment spans residues 620–640 (MVAWVVSTGVAIACCAAVYYL). At 641 to 654 (AEYNLEFLKTHSNP) the chain is on the extracellular side. The helical transmembrane segment at 655 to 675 (GAVLLLPFVVSCINLAVPCIY) threads the bilayer. The Cytoplasmic segment spans residues 676 to 698 (SMFRLVERYEMPRHEVYVLLIRN). The chain crosses the membrane as a helical span at residues 699–719 (IFLKISIIGILCYYWLNTVAL). Topologically, residues 720–732 (SGEECWETLIGQD) are extracellular. The chain crosses the membrane as a helical span at residues 733-753 (IYRLLLMDFVFSLVNSFLGEF). At 754–786 (LRRIIGMQLITSLGLQEFDIARNVLELIYAQTL) the chain is on the cytoplasmic side. Residues 787–807 (VWIGIFFCPLLPFIQMIMLFI) traverse the membrane as a helical segment. The Extracellular portion of the chain corresponds to 808–835 (MFYSKNISLMMNFQPPSKAWRASQMMTF). A helical membrane pass occupies residues 836–856 (FIFLLFFPSFTGVLCTLAITI). The Cytoplasmic segment spans residues 857 to 900 (WRLKPSADCGPFRGLPLFIHSIYSWIDTLSTRPGYLWVVWIYRN). Residues 901-921 (LIGSVHFFFILTLIVLIITYL) form a helical membrane-spanning segment. The Extracellular segment spans residues 922-1006 (YWQITEGRKI…RSVQEGNPRA (85 aa)).

The protein belongs to the TMC family.

It localises to the membrane. Functionally, probable component of an ion channel. Molecular function hasn't been characterized yet. The chain is Transmembrane channel-like protein 5 from Homo sapiens (Human).